Reading from the N-terminus, the 123-residue chain is CD59A glycoprotein (123 aa).

Residues 1-23 (MRAQRGLILLLLLLAVFCSTAVS) form the signal peptide. In terms of domain architecture, UPAR/Ly6 spans 24–96 (LTCYHCFQPV…CCQFNLCNKS (73 aa)). 5 disulfides stabilise this stretch: Cys-26–Cys-50, Cys-29–Cys-37, Cys-43–Cys-63, Cys-69–Cys-87, and Cys-88–Cys-93. Asn-40 carries N-linked (GlcNAc...) asparagine glycosylation. Asn-94 carries an N-linked (GlcNAc...) asparagine glycan. Positions 97–123 (DGSLGKTPLLGTSVLVAILNLCFLSHL) are cleaved as a propeptide — removed in mature form.

In terms of assembly, interacts with T-cell surface antigen CD2. N- and O-glycosylated. Expressed in all tissues examined (liver, kidney, spleen, thymus, brain and heart). Low levels in thymus. Also expressed in mononuclear cells, erythrocytes and platelets. Barely detected in neutrophils.

It is found in the cell membrane. The protein localises to the secreted. Its function is as follows. Potent inhibitor of the complement membrane attack complex (MAC) action, which protects self-cells from damage during complement activation. Acts by binding to the beta-haipins of C8 (C8A and C8B) components of the assembling MAC, forming an intermolecular beta-sheet that prevents incorporation of the multiple copies of C9 required for complete formation of the osmolytic pore. The polypeptide is CD59A glycoprotein (Mus musculus (Mouse)).